Here is a 673-residue protein sequence, read N- to C-terminus: Sodium/myo-inositol cotransporter 2 (673 aa).

Over 1–27 (MESTTSSPQPPPSDALEAFPQKSMEPA) the chain is Extracellular. Residues 28-48 (DIVVLVLYFLFVLAVGLWSTV) traverse the membrane as a helical segment. The Cytoplasmic portion of the chain corresponds to 49–56 (RTKRDTVK). Residues 57 to 77 (GYFLAGGDMVWWPVGASLFAS) traverse the membrane as a helical segment. Position 78 (Asn-78) is a topological domain, extracellular. A helical membrane pass occupies residues 79–99 (VGSGHFIGLAGSGAAVGISVA). Topologically, residues 100–102 (AYE) are cytoplasmic. Residues 103 to 123 (LNGLFSVLMLAWIFLPIYIAG) traverse the membrane as a helical segment. Residues 124 to 180 (QVTTMPEYLKRRFGGSRIPITLASIYPSTHSLTILQVDMYAGAIFIQQSLHLDLYLA) lie on the Extracellular side of the membrane. The chain crosses the membrane as a helical span at residues 181 to 201 (IVGLLAVTALYTVAGGLAAVI). The Cytoplasmic segment spans residues 202 to 208 (YTDALQT). Residues 209-229 (VIMLIGAFILMGYSFAAVGGM) form a helical membrane-spanning segment. Over 230–272 (EGLKDQYFLALASNRSENSSCGLPREDAFHIFRDPLTSDLPWP) the chain is Extracellular. Residues 273-293 (GILFGMSIPSLWYWCTDQVIV) traverse the membrane as a helical segment. Topologically, residues 294 to 308 (QRSLAAKNLSHAKGG) are cytoplasmic. The helical transmembrane segment at 309–329 (SLMAAYLKVLPLFLMVFPGMV) threads the bilayer. Residues 330 to 375 (SRILFPDQVACAHPDICQRVCSNPSGCSDIAYPKLVLELLPTGLRG) lie on the Extracellular side of the membrane. The chain crosses the membrane as a helical span at residues 376 to 396 (LMMAVMVAALMSSLTSIFNSA). The Cytoplasmic portion of the chain corresponds to 397–418 (STIFTMDLWHHIRPRASERELM). A helical membrane pass occupies residues 419 to 439 (IVGRVFVLALVLVSILWIPVV). Over 440–446 (QASQGGQ) the chain is Extracellular. The helical transmembrane segment at 447–467 (LFIYIQSISSYLQPPVAVVFI) threads the bilayer. Over 468–479 (MGCFWKRTNEKG) the chain is Cytoplasmic. The chain crosses the membrane as a helical span at residues 480-500 (AFSGLILGLLLGLVRLILDFV). Topologically, residues 501 to 521 (YVQPRCDQPDDRPAVVKDVHY) are extracellular. The helical transmembrane segment at 522–542 (LYFSMILSSTTLITVFTVSWF) threads the bilayer. At 543–652 (TETPSKEMVS…SLEENPLVKT (110 aa)) the chain is on the cytoplasmic side. Residues 653–673 (LLDVNCIVCISCAIFLWGYFA) form a helical membrane-spanning segment.

It belongs to the sodium:solute symporter (SSF) (TC 2.A.21) family. As to expression, expressed in kidney and small intestine.

The protein localises to the membrane. It localises to the apical cell membrane. The enzyme catalyses myo-inositol(out) + 2 Na(+)(out) = myo-inositol(in) + 2 Na(+)(in). The catalysed reaction is 1D-chiro-inositol(out) + 2 Na(+)(out) = 1D-chiro-inositol(in) + 2 Na(+)(in). It catalyses the reaction D-glucose(out) + 2 Na(+)(out) = D-glucose(in) + 2 Na(+)(in). It carries out the reaction D-xylose(out) + 2 Na(+)(out) = D-xylose(in) + 2 Na(+)(in). Its activity is regulated as follows. MI transport activity inhibited by D-chiro-inositol (DCI), phlorizin (Pz) and sodium (Na(+)). Insulin increases D-chiro-inositol uptake. In terms of biological role, involved in the sodium-dependent cotransport of myo-inositol (MI) with a Na(+):MI stoichiometry of 2:1. Exclusively responsible for apical MI transport and absorption in intestine. Can also transport D-chiro-inositol (DCI) but not L-fucose. Exhibits stereospecific cotransport of both D-glucose and D-xylose. May induce apoptosis through the TNF-alpha, PDCD1 pathway. May play a role in the regulation of MI concentration in serum, involving reabsorption in at least the proximal tubule of the kidney. The protein is Sodium/myo-inositol cotransporter 2 of Rattus norvegicus (Rat).